Here is a 571-residue protein sequence, read N- to C-terminus: Plastidial pyruvate kinase 3, chloroplastic (571 aa).

Residues 1-55 (MAAYGQISSGMTVDPQVLSSSRNIGVSLSPLRRTLIGAGVRSTSISLRQCSLSVR) constitute a chloroplast transit peptide. Arginine 129 contacts substrate. The K(+) site is built by asparagine 131, serine 133, aspartate 164, and threonine 165. ATP is bound at residue 131-134 (NMSH). Arginine 171 contacts ATP. Substrate is bound at residue lysine 314. Glutamate 316 provides a ligand contact to Mg(2+). Substrate-binding residues include glycine 339, aspartate 340, and threonine 372. Aspartate 340 provides a ligand contact to Mg(2+).

Belongs to the pyruvate kinase family. As to quaternary structure, oligomer of alpha and beta subunits. Mg(2+) serves as cofactor. The cofactor is K(+). As to expression, expressed at low levels in roots, leaves, inflorescences, siliques, pollen, seeds and flowers.

The protein localises to the plastid. The protein resides in the chloroplast stroma. It carries out the reaction pyruvate + ATP = phosphoenolpyruvate + ADP + H(+). The protein operates within carbohydrate degradation; glycolysis; pyruvate from D-glyceraldehyde 3-phosphate: step 5/5. Functionally, required for plastidial pyruvate kinase activity. This is Plastidial pyruvate kinase 3, chloroplastic (PKP3) from Arabidopsis thaliana (Mouse-ear cress).